A 397-amino-acid chain; its full sequence is Riboflavin biosynthesis protein RibBA (397 aa).

Residues 1-199 (MFHRIEEALE…IEDLIAYRRH (199 aa)) form a DHBP synthase region. D-ribulose 5-phosphate is bound by residues 26–27 (RE), aspartate 31, 138–142 (RAGHT), and glutamate 162. Glutamate 27 contacts Mg(2+). Residue histidine 141 participates in Mg(2+) binding. Residues 200 to 397 (HETLVTREVE…VNKLGHLLNL (198 aa)) form a GTP cyclohydrolase II region. 250 to 254 (RVHSE) provides a ligand contact to GTP. Zn(2+) contacts are provided by cysteine 255, cysteine 266, and cysteine 268. Residues glutamine 271, 293-295 (EGR), and threonine 315 contribute to the GTP site. The active-site Proton acceptor; for GTP cyclohydrolase activity is the aspartate 327. Arginine 329 acts as the Nucleophile; for GTP cyclohydrolase activity in catalysis. Residues threonine 350 and lysine 355 each coordinate GTP.

The protein in the N-terminal section; belongs to the DHBP synthase family. This sequence in the C-terminal section; belongs to the GTP cyclohydrolase II family. The cofactor is Mg(2+). Requires Mn(2+) as cofactor. It depends on Zn(2+) as a cofactor.

The enzyme catalyses D-ribulose 5-phosphate = (2S)-2-hydroxy-3-oxobutyl phosphate + formate + H(+). It catalyses the reaction GTP + 4 H2O = 2,5-diamino-6-hydroxy-4-(5-phosphoribosylamino)-pyrimidine + formate + 2 phosphate + 3 H(+). The protein operates within cofactor biosynthesis; riboflavin biosynthesis; 2-hydroxy-3-oxobutyl phosphate from D-ribulose 5-phosphate: step 1/1. It functions in the pathway cofactor biosynthesis; riboflavin biosynthesis; 5-amino-6-(D-ribitylamino)uracil from GTP: step 1/4. In terms of biological role, catalyzes the conversion of D-ribulose 5-phosphate to formate and 3,4-dihydroxy-2-butanone 4-phosphate. Functionally, catalyzes the conversion of GTP to 2,5-diamino-6-ribosylamino-4(3H)-pyrimidinone 5'-phosphate (DARP), formate and pyrophosphate. This is Riboflavin biosynthesis protein RibBA from Bacillus cereus (strain ATCC 10987 / NRS 248).